Consider the following 266-residue polypeptide: Undecaprenyl-diphosphatase (266 aa).

Helical transmembrane passes span 1–21 (METFQVILLALIQGLTEFLPI), 39–59 (QGLSFDVAVNTGSLFAVVIYF), 87–107 (WWIILATIPAVIVGFTAKDFI), 111–131 (FRNTLVIAITTIVFGLLLWAA), 144–164 (MGWKKALLIGLAQAMALIPGT), 183–203 (AAARFSFLMSVPVSFGAALLV), 218–238 (ALGLGIVVSFVAAYLCIHFFL), and 244–264 (IGMTPFVLYRLALGAILLGLL).

Belongs to the UppP family.

The protein resides in the cell inner membrane. The enzyme catalyses di-trans,octa-cis-undecaprenyl diphosphate + H2O = di-trans,octa-cis-undecaprenyl phosphate + phosphate + H(+). Functionally, catalyzes the dephosphorylation of undecaprenyl diphosphate (UPP). Confers resistance to bacitracin. The protein is Undecaprenyl-diphosphatase of Shewanella frigidimarina (strain NCIMB 400).